We begin with the raw amino-acid sequence, 119 residues long: NADH-quinone oxidoreductase subunit A (119 aa).

The next 3 membrane-spanning stretches (helical) occupy residues F7–G27, L63–V83, and I88–V108.

Belongs to the complex I subunit 3 family. In terms of assembly, NDH-1 is composed of 14 different subunits. Subunits NuoA, H, J, K, L, M, N constitute the membrane sector of the complex.

Its subcellular location is the cell membrane. It carries out the reaction a quinone + NADH + 5 H(+)(in) = a quinol + NAD(+) + 4 H(+)(out). Its function is as follows. NDH-1 shuttles electrons from NADH, via FMN and iron-sulfur (Fe-S) centers, to quinones in the respiratory chain. The immediate electron acceptor for the enzyme in this species is believed to be ubiquinone. Couples the redox reaction to proton translocation (for every two electrons transferred, four hydrogen ions are translocated across the cytoplasmic membrane), and thus conserves the redox energy in a proton gradient. The polypeptide is NADH-quinone oxidoreductase subunit A (Polynucleobacter asymbioticus (strain DSM 18221 / CIP 109841 / QLW-P1DMWA-1) (Polynucleobacter necessarius subsp. asymbioticus)).